Reading from the N-terminus, the 623-residue chain is uncharacterized protein (623 aa).

Positions 256-351 (AEEKLLSKNK…EEIHGLKKKN (96 aa)) form a coiled coil. Disordered regions lie at residues 417-485 (NRRN…SPSS) and 497-536 (ALSS…ECAT). A compositionally biased stretch (polar residues) spans 422 to 431 (LESVPFNTLS). Residues 452 to 481 (ELKKPAESYGDETKKPNQHNKDGSIDEKPK) show a composition bias toward basic and acidic residues.

This is an uncharacterized protein from Arabidopsis thaliana (Mouse-ear cress).